The sequence spans 238 residues: Histone deacetylase 7 (238 aa).

Disordered regions lie at residues 1–26 (TPGS…PEPA) and 47–72 (QQQR…GQQE). An interaction with MEF2A region spans residues 58–158 (SMDPPLPELQ…LPTEPPEHFP (101 aa)). Residues Ser118 and Ser164 each carry the phosphoserine modification. Residues 145–238 (PVPSLPTEPP…NPALGSEADG (94 aa)) form a disordered region. The span at 176–190 (KSLERRKNPLLRKES) shows a compositional bias: basic and acidic residues. Ser190 carries the post-translational modification Phosphoserine; by PKD/PRKD2. The segment covering 206–221 (SSPSSSSTPASGCSSP) has biased composition (low complexity).

This sequence belongs to the histone deacetylase family. HD type 2 subfamily. In terms of assembly, interacts with HDAC1, HDAC2, HDAC3, HDAC4, HDAC5, NCOR1, NCOR2, SIN3A, SIN3B, RBBP4, RBBP7, MTA1L1, SAP30 and MBD3. Interacts with KAT5 and EDNRA. Interacts with the 14-3-3 protein YWHAE, MEF2A, MEF2B and MEF2C. Interacts with ZMYND15. Interacts with KDM5B. Interacts with PML. Interacts with FOXP3. Interacts with RARA. Post-translationally, may be phosphorylated by CaMK1. Phosphorylated by the PKC kinases PKN1 and PKN2, impairing nuclear import. Phosphorylation at Ser-164 by MARK2, MARK3 and PRKD1 promotes interaction with 14-3-3 proteins and export from the nucleus. Phosphorylation at Ser-164 is a prerequisite for phosphorylation at Ser-190.

The protein localises to the nucleus. It localises to the cytoplasm. The enzyme catalyses N(6)-acetyl-L-lysyl-[histone] + H2O = L-lysyl-[histone] + acetate. It catalyses the reaction N(6)-acetyl-L-lysyl-[protein] + H2O = L-lysyl-[protein] + acetate. In terms of biological role, responsible for the deacetylation of lysine residues on the N-terminal part of the core histones (H2A, H2B, H3 and H4). Histone deacetylation gives a tag for epigenetic repression and plays an important role in transcriptional regulation, cell cycle progression and developmental events. Histone deacetylases act via the formation of large multiprotein complexes. Involved in muscle maturation by repressing transcription of myocyte enhancer factors such as MEF2A, MEF2B and MEF2C. During muscle differentiation, it shuttles into the cytoplasm, allowing the expression of myocyte enhancer factors. May be involved in Epstein-Barr virus (EBV) latency, possibly by repressing the viral BZLF1 gene. Positively regulates the transcriptional repressor activity of FOXP3. Serves as a corepressor of RARA, causing its deacetylation and inhibition of RARE DNA element binding. In association with RARA, plays a role in the repression of microRNA-10a and thereby in the inflammatory response. Also acetylates non-histone proteins, such as ALKBH5. The sequence is that of Histone deacetylase 7 (Hdac7) from Rattus norvegicus (Rat).